Reading from the N-terminus, the 497-residue chain is Cytochrome P450 monooxygenase cicH (497 aa).

A helical membrane pass occupies residues 2 to 19 (AILVRLFFALFVVSVYFF). C439 is a binding site for heme. N443 carries an N-linked (GlcNAc...) asparagine glycan.

This sequence belongs to the cytochrome P450 family. It depends on heme as a cofactor.

The protein localises to the membrane. It participates in phytotoxin biosynthesis. Its function is as follows. Cytochrome P450 monooxygenase; part of the gene cluster that mediates the biosynthesis of cichorine, a phytotoxin active against knapweed, corn, and soybeans. The first step in the pathway is performed by the non-reducing polyketide synthase pkbA that condenses one acetyl-CoA starter unit with 3 malonyl-CoA units. PkbA also catalyzes one methylation step to produce 3-methylorsellinate. The nonribosomal peptide synthase-like protein cicB, the cytochrome P450 monooxygenase cicH and the O-methyltransferase cicE are involved in the conversion of 3-methylorsellinate into nidulol. CicB converts 3-methylorsellinate to a yet unidentified intermediate, cicH may play a ring-closing role for cichorine and cicE is plausibly responsible for the methylation of one of the phenol groups. The oxidoreductase cicC acts downstream with still unidentified enzymes to further convert nidulol into cichorine. This is Cytochrome P450 monooxygenase cicH from Emericella nidulans (strain FGSC A4 / ATCC 38163 / CBS 112.46 / NRRL 194 / M139) (Aspergillus nidulans).